The primary structure comprises 286 residues: Urease accessory protein UreD (286 aa).

The protein belongs to the UreD family. As to quaternary structure, ureD, UreF and UreG form a complex that acts as a GTP-hydrolysis-dependent molecular chaperone, activating the urease apoprotein by helping to assemble the nickel containing metallocenter of UreC. The UreE protein probably delivers the nickel.

Its subcellular location is the cytoplasm. In terms of biological role, required for maturation of urease via the functional incorporation of the urease nickel metallocenter. The sequence is that of Urease accessory protein UreD from Rhodopseudomonas palustris (strain BisA53).